We begin with the raw amino-acid sequence, 187 residues long: Interferon beta (187 aa).

The N-terminal stretch at 1-21 is a signal peptide; the sequence is MTSRSLLPFVLSLLLPRIIMA. Tyr-24 carries the phosphotyrosine modification. Cys-53 and Cys-162 are disulfide-bonded. N-linked (GlcNAc...) asparagine glycans are attached at residues Asn-76, Asn-95, Asn-132, and Asn-158.

It belongs to the alpha/beta interferon family. Monomer.

It localises to the secreted. Its function is as follows. Type I interferon cytokine that plays a key role in the innate immune response to infection, developing tumors and other inflammatory stimuli. Signals via binding to high-affinity (IFNAR2) and low-affinity (IFNAR1) heterodimeric receptor, activating the canonical Jak-STAT signaling pathway resulting in transcriptional activation or repression of interferon-regulated genes that encode the effectors of the interferon response, such as antiviral proteins, regulators of cell proliferation and differentiation, and immunoregulatory proteins. Signals mostly via binding to a IFNAR1-IFNAR2 heterodimeric receptor, but can also function with IFNAR1 alone and independently of Jak-STAT pathways. Elicits a wide variety of responses, including antiviral and antibacterial activities, and can regulate the development of B-cells, myelopoiesis and lipopolysaccharide (LPS)-inducible production of tumor necrosis factor. Plays a role in neuronal homeostasis by regulating dopamine turnover and protecting dopaminergic neurons: acts by promoting neuronal autophagy and alpha-synuclein clearance, thereby preventing dopaminergic neuron loss. IFNB1 is more potent than interferon-alpha (IFN-alpha) in inducing the apoptotic and antiproliferative pathways required for control of tumor cell growth. The protein is Interferon beta (IFNB1) of Tachyglossus aculeatus aculeatus (Southeast Australian short-beaked echidna).